The chain runs to 234 residues: Small ribosomal subunit protein eS4 (234 aa).

The region spanning 38–99 (IPLLIALRDY…GNDYLVSYDR (62 aa)) is the S4 RNA-binding; degenerate domain.

It belongs to the eukaryotic ribosomal protein eS4 family.

The chain is Small ribosomal subunit protein eS4 (rps4e) from Picrophilus torridus (strain ATCC 700027 / DSM 9790 / JCM 10055 / NBRC 100828 / KAW 2/3).